The following is a 72-amino-acid chain: Translation initiation factor IF-1 (72 aa).

The 72-residue stretch at 1–72 (MAKSDVIEVE…SKGRITYRFK (72 aa)) folds into the S1-like domain.

Belongs to the IF-1 family. As to quaternary structure, component of the 30S ribosomal translation pre-initiation complex which assembles on the 30S ribosome in the order IF-2 and IF-3, IF-1 and N-formylmethionyl-tRNA(fMet); mRNA recruitment can occur at any time during PIC assembly.

Its subcellular location is the cytoplasm. One of the essential components for the initiation of protein synthesis. Stabilizes the binding of IF-2 and IF-3 on the 30S subunit to which N-formylmethionyl-tRNA(fMet) subsequently binds. Helps modulate mRNA selection, yielding the 30S pre-initiation complex (PIC). Upon addition of the 50S ribosomal subunit IF-1, IF-2 and IF-3 are released leaving the mature 70S translation initiation complex. This chain is Translation initiation factor IF-1, found in Levilactobacillus brevis (strain ATCC 367 / BCRC 12310 / CIP 105137 / JCM 1170 / LMG 11437 / NCIMB 947 / NCTC 947) (Lactobacillus brevis).